Consider the following 179-residue polypeptide: Large ribosomal subunit protein uL5 (179 aa).

It belongs to the universal ribosomal protein uL5 family. As to quaternary structure, part of the 50S ribosomal subunit; part of the 5S rRNA/L5/L18/L25 subcomplex. Contacts the 5S rRNA and the P site tRNA. Forms a bridge to the 30S subunit in the 70S ribosome.

Its function is as follows. This is one of the proteins that bind and probably mediate the attachment of the 5S RNA into the large ribosomal subunit, where it forms part of the central protuberance. In the 70S ribosome it contacts protein S13 of the 30S subunit (bridge B1b), connecting the 2 subunits; this bridge is implicated in subunit movement. Contacts the P site tRNA; the 5S rRNA and some of its associated proteins might help stabilize positioning of ribosome-bound tRNAs. This Stutzerimonas stutzeri (strain A1501) (Pseudomonas stutzeri) protein is Large ribosomal subunit protein uL5.